Consider the following 226-residue polypeptide: Thiamine-phosphate synthase (226 aa).

4-amino-2-methyl-5-(diphosphooxymethyl)pyrimidine is bound by residues 46-50 (QFRDK) and D83. Mg(2+) is bound by residues D84 and D103. S122 contributes to the 4-amino-2-methyl-5-(diphosphooxymethyl)pyrimidine binding site. Residue 149-151 (TQS) coordinates 2-[(2R,5Z)-2-carboxy-4-methylthiazol-5(2H)-ylidene]ethyl phosphate. 4-amino-2-methyl-5-(diphosphooxymethyl)pyrimidine is bound at residue K152. 2-[(2R,5Z)-2-carboxy-4-methylthiazol-5(2H)-ylidene]ethyl phosphate-binding positions include G181 and 201–202 (IT).

This sequence belongs to the thiamine-phosphate synthase family. The cofactor is Mg(2+).

It catalyses the reaction 2-[(2R,5Z)-2-carboxy-4-methylthiazol-5(2H)-ylidene]ethyl phosphate + 4-amino-2-methyl-5-(diphosphooxymethyl)pyrimidine + 2 H(+) = thiamine phosphate + CO2 + diphosphate. The catalysed reaction is 2-(2-carboxy-4-methylthiazol-5-yl)ethyl phosphate + 4-amino-2-methyl-5-(diphosphooxymethyl)pyrimidine + 2 H(+) = thiamine phosphate + CO2 + diphosphate. It carries out the reaction 4-methyl-5-(2-phosphooxyethyl)-thiazole + 4-amino-2-methyl-5-(diphosphooxymethyl)pyrimidine + H(+) = thiamine phosphate + diphosphate. It functions in the pathway cofactor biosynthesis; thiamine diphosphate biosynthesis; thiamine phosphate from 4-amino-2-methyl-5-diphosphomethylpyrimidine and 4-methyl-5-(2-phosphoethyl)-thiazole: step 1/1. Functionally, condenses 4-methyl-5-(beta-hydroxyethyl)thiazole monophosphate (THZ-P) and 2-methyl-4-amino-5-hydroxymethyl pyrimidine pyrophosphate (HMP-PP) to form thiamine monophosphate (TMP). In Haemophilus influenzae (strain PittGG), this protein is Thiamine-phosphate synthase.